The sequence spans 340 residues: Methionine import ATP-binding protein MetN 2 (340 aa).

An ABC transporter domain is found at 2–241 (ITLQNVVKEY…PQEKVTQRFV (240 aa)). 38-45 (GYSGAGKS) is an ATP binding site.

It belongs to the ABC transporter superfamily. Methionine importer (TC 3.A.1.24) family. The complex is composed of two ATP-binding proteins (MetN), two transmembrane proteins (MetI) and a solute-binding protein (MetQ).

Its subcellular location is the cell membrane. The catalysed reaction is L-methionine(out) + ATP + H2O = L-methionine(in) + ADP + phosphate + H(+). It catalyses the reaction D-methionine(out) + ATP + H2O = D-methionine(in) + ADP + phosphate + H(+). Part of the ABC transporter complex MetNIQ involved in methionine import. Responsible for energy coupling to the transport system. The chain is Methionine import ATP-binding protein MetN 2 from Listeria monocytogenes serotype 4b (strain F2365).